The following is a 200-amino-acid chain: 3-isopropylmalate dehydratase small subunit (200 aa).

The protein belongs to the LeuD family. LeuD type 1 subfamily. Heterodimer of LeuC and LeuD.

It catalyses the reaction (2R,3S)-3-isopropylmalate = (2S)-2-isopropylmalate. Its pathway is amino-acid biosynthesis; L-leucine biosynthesis; L-leucine from 3-methyl-2-oxobutanoate: step 2/4. In terms of biological role, catalyzes the isomerization between 2-isopropylmalate and 3-isopropylmalate, via the formation of 2-isopropylmaleate. The protein is 3-isopropylmalate dehydratase small subunit of Campylobacter jejuni subsp. jejuni serotype O:23/36 (strain 81-176).